The following is a 153-amino-acid chain: Ribosomal RNA large subunit methyltransferase H (153 aa).

2 residues coordinate S-adenosyl-L-methionine: Leu-71 and Gly-102.

This sequence belongs to the RNA methyltransferase RlmH family. In terms of assembly, homodimer.

Its subcellular location is the cytoplasm. It catalyses the reaction pseudouridine(1915) in 23S rRNA + S-adenosyl-L-methionine = N(3)-methylpseudouridine(1915) in 23S rRNA + S-adenosyl-L-homocysteine + H(+). In terms of biological role, specifically methylates the pseudouridine at position 1915 (m3Psi1915) in 23S rRNA. This Anaeromyxobacter dehalogenans (strain 2CP-1 / ATCC BAA-258) protein is Ribosomal RNA large subunit methyltransferase H.